Here is a 331-residue protein sequence, read N- to C-terminus: Fructose-1,6-bisphosphatase class 1 (331 aa).

Mg(2+)-binding residues include glutamate 80, aspartate 98, leucine 100, and aspartate 101. Substrate is bound by residues 101–104 (DGSS) and asparagine 189. Glutamate 261 serves as a coordination point for Mg(2+).

It belongs to the FBPase class 1 family. As to quaternary structure, homotetramer. Mg(2+) is required as a cofactor.

The protein resides in the cytoplasm. The enzyme catalyses beta-D-fructose 1,6-bisphosphate + H2O = beta-D-fructose 6-phosphate + phosphate. It participates in carbohydrate biosynthesis; gluconeogenesis. This is Fructose-1,6-bisphosphatase class 1 from Rhodobacter capsulatus (strain ATCC BAA-309 / NBRC 16581 / SB1003).